A 397-amino-acid chain; its full sequence is MDSDPVSDYLKYENEPEYLDLEELPDSDEPVYILGKQYDTKTDKCDLQSDIVSRLWFTYRKKFSPIGGTGPSSDTGWGCMLRCGQMMLAQALVCQHLGRDWRWEKHKNHPEEYQQILQCFLDRKDCCYSIHQMAQMGVGEGKSIGEWFGPNTVAQVLKKLALFDEWNSLAVYVSMDNTVVVEDIKTMCKYQPQSCSMAQAASHQSTWSRCRDTSGHCSGWRPLLLVVPLRLGINHINPVYVDAFKACFKMPQSLGALGGKPNHAYYFIGFSGDEIIYLDPHTTQTFVDTEEAGTVQDQTYHCQKGPNSMKVLNLDPSVALGFFCKDENDFNNWCEVIEKEILKHQSLRMFELTPKHPPHWPPFIPPTKPEVTTTGAELIESTDKLFDVEEEFEILSV.

The active-site Nucleophile is the cysteine 79. Active-site residues include aspartate 279 and histidine 281. Positions 392 to 395 match the LIR motif; the sequence is FEIL.

This sequence belongs to the peptidase C54 family.

The protein localises to the cytoplasm. The catalysed reaction is [protein]-C-terminal L-amino acid-glycyl-phosphatidylethanolamide + H2O = [protein]-C-terminal L-amino acid-glycine + a 1,2-diacyl-sn-glycero-3-phosphoethanolamine. Functionally, cysteine protease that plays a key role in autophagy by mediating both proteolytic activation and delipidation of ATG8 family proteins. The protease activity is required for proteolytic activation of ATG8 family proteins: cleaves the C-terminal amino acid of ATG8 proteins to reveal a C-terminal glycine. Exposure of the glycine at the C-terminus is essential for ATG8 proteins conjugation to phosphatidylethanolamine (PE) and insertion to membranes, which is necessary for autophagy. Protease activity is also required to counteract formation of high-molecular weight conjugates of ATG8 proteins (ATG8ylation): acts as a deubiquitinating-like enzyme that removes ATG8 conjugated to other proteins, such as ATG3. In addition to the protease activity, also mediates delipidation of ATG8 family proteins. Catalyzes delipidation of PE-conjugated forms of ATG8 proteins during macroautophagy. The protein is Cysteine protease ATG4A of Xenopus laevis (African clawed frog).